A 184-amino-acid chain; its full sequence is Ras-related protein Rap-1b (184 aa).

10 to 18 is a binding site for GTP; the sequence is GSGGVGKSA. Positions 25–67 are interaction with KRIT1; sequence QGIFVEKYDPTIEDSYRKQVEVDAQQCMLEILDTAGTEQFTAM. The short motif at 32–40 is the Effector region element; it reads YDPTIEDSY. GTP is bound by residues 57-61, 116-119, and 147-149; these read DTAGT, NKCD, and SAK. Ser179 carries the phosphoserine; by PKA modification. At Cys181 the chain carries Cysteine methyl ester. Cys181 is lipidated: S-geranylgeranyl cysteine. Positions 182 to 184 are cleaved as a propeptide — removed in mature form; it reads QLL.

Heterodimer with RAP1GAP. Interacts with EPAC2. Interacts with SGSM1. Interacts with SGSM2. Interacts with SGSM3. Interacts with KRIT1. Interacts with RAP1GDS1.

It localises to the cell membrane. Its subcellular location is the cytoplasm. The protein localises to the cytosol. It is found in the cell junction. It carries out the reaction GTP + H2O = GDP + phosphate + H(+). Its activity is regulated as follows. Activated by guanine nucleotide-exchange factor (GEF) EPAC2 in a cAMP-dependent manner. Its function is as follows. GTP-binding protein that possesses intrinsic GTPase activity. Contributes to the polarizing activity of KRIT1 and CDH5 in the establishment and maintenance of correct endothelial cell polarity and vascular lumen. Required for the localization of phosphorylated PRKCZ, PARD3 and TIAM1 to the cell junction. Plays a role in the establishment of basal endothelial barrier function. This chain is Ras-related protein Rap-1b (RAP1B), found in Bos taurus (Bovine).